The primary structure comprises 564 residues: Arginine--tRNA ligase (564 aa).

The short motif at 122-132 (PNIAKPFSIGH) is the 'HIGH' region element.

The protein belongs to the class-I aminoacyl-tRNA synthetase family. As to quaternary structure, monomer.

The protein localises to the cytoplasm. The enzyme catalyses tRNA(Arg) + L-arginine + ATP = L-arginyl-tRNA(Arg) + AMP + diphosphate. The protein is Arginine--tRNA ligase of Lactococcus lactis subsp. cremoris (strain SK11).